Here is a 311-residue protein sequence, read N- to C-terminus: Probable manganese-dependent inorganic pyrophosphatase (311 aa).

H9, D13, D15, D75, H97, and D149 together coordinate Mn(2+).

Belongs to the PPase class C family. Requires Mn(2+) as cofactor.

It localises to the cytoplasm. The catalysed reaction is diphosphate + H2O = 2 phosphate + H(+). This is Probable manganese-dependent inorganic pyrophosphatase from Lactobacillus delbrueckii subsp. bulgaricus (strain ATCC BAA-365 / Lb-18).